A 778-amino-acid polypeptide reads, in one-letter code: Glutathione biosynthesis bifunctional protein GshAB (778 aa).

The interval 1–354 (MVNLDKGLLK…EEFFKNHDMV (354 aa)) is glutamate--cysteine ligase. The 257-residue stretch at 521–777 (KDILRENNIR…AGEKILDLLF (257 aa)) folds into the ATP-grasp domain. Position 548 to 606 (548 to 606 (RLFKDEKIVIKPKSTNFGLGISIFPGEYSREDYDKAVEIAFREDSSILIEEFMTGKEYR)) interacts with ATP. 3 residues coordinate Mg(2+): Asp728, Glu747, and Asn749. Residues Asp728, Glu747, and Asn749 each coordinate Mn(2+).

The protein in the N-terminal section; belongs to the glutamate--cysteine ligase type 1 family. Type 2 subfamily. Monomer. Mg(2+) serves as cofactor. It depends on Mn(2+) as a cofactor.

The catalysed reaction is L-cysteine + L-glutamate + ATP = gamma-L-glutamyl-L-cysteine + ADP + phosphate + H(+). The enzyme catalyses gamma-L-glutamyl-L-cysteine + glycine + ATP = glutathione + ADP + phosphate + H(+). The protein operates within sulfur metabolism; glutathione biosynthesis; glutathione from L-cysteine and L-glutamate: step 1/2. Its pathway is sulfur metabolism; glutathione biosynthesis; glutathione from L-cysteine and L-glutamate: step 2/2. Synthesizes glutathione from L-glutamate and L-cysteine via gamma-L-glutamyl-L-cysteine. The chain is Glutathione biosynthesis bifunctional protein GshAB from Clostridium perfringens (strain 13 / Type A).